We begin with the raw amino-acid sequence, 271 residues long: Urease accessory protein UreD (271 aa).

The protein belongs to the UreD family. In terms of assembly, ureD, UreF and UreG form a complex that acts as a GTP-hydrolysis-dependent molecular chaperone, activating the urease apoprotein by helping to assemble the nickel containing metallocenter of UreC. The UreE protein probably delivers the nickel.

The protein resides in the cytoplasm. Required for maturation of urease via the functional incorporation of the urease nickel metallocenter. This Haemophilus influenzae (strain 86-028NP) protein is Urease accessory protein UreD.